The primary structure comprises 78 residues: Small ribosomal subunit protein bS18A (78 aa).

Belongs to the bacterial ribosomal protein bS18 family. Part of the 30S ribosomal subunit. Forms a tight heterodimer with protein bS6.

Binds as a heterodimer with protein bS6 to the central domain of the 16S rRNA, where it helps stabilize the platform of the 30S subunit. This is Small ribosomal subunit protein bS18A from Streptomyces avermitilis (strain ATCC 31267 / DSM 46492 / JCM 5070 / NBRC 14893 / NCIMB 12804 / NRRL 8165 / MA-4680).